The chain runs to 505 residues: ATP synthase subunit alpha (505 aa).

170–177 (GDRQTGKS) contacts ATP.

This sequence belongs to the ATPase alpha/beta chains family. In terms of assembly, F-type ATPases have 2 components, CF(1) - the catalytic core - and CF(0) - the membrane proton channel. CF(1) has five subunits: alpha(3), beta(3), gamma(1), delta(1), epsilon(1). CF(0) has four main subunits: a(1), b(1), b'(1) and c(9-12).

The protein resides in the cellular thylakoid membrane. It carries out the reaction ATP + H2O + 4 H(+)(in) = ADP + phosphate + 5 H(+)(out). In terms of biological role, produces ATP from ADP in the presence of a proton gradient across the membrane. The alpha chain is a regulatory subunit. The protein is ATP synthase subunit alpha of Prochlorococcus marinus (strain MIT 9312).